A 342-amino-acid polypeptide reads, in one-letter code: L-threonine 3-dehydrogenase (342 aa).

Cysteine 38 serves as a coordination point for Zn(2+). Active-site charge relay system residues include threonine 40 and histidine 43. Histidine 63 and glutamate 64 together coordinate Zn(2+). NAD(+)-binding positions include isoleucine 175, aspartate 195, arginine 200, 263 to 265 (LGI), and 287 to 288 (VY).

The protein belongs to the zinc-containing alcohol dehydrogenase family. As to quaternary structure, homotetramer. Zn(2+) is required as a cofactor.

It localises to the cytoplasm. The enzyme catalyses L-threonine + NAD(+) = (2S)-2-amino-3-oxobutanoate + NADH + H(+). It functions in the pathway amino-acid degradation; L-threonine degradation via oxydo-reductase pathway; glycine from L-threonine: step 1/2. In terms of biological role, catalyzes the NAD(+)-dependent oxidation of L-threonine to 2-amino-3-ketobutyrate. In Ruegeria pomeroyi (strain ATCC 700808 / DSM 15171 / DSS-3) (Silicibacter pomeroyi), this protein is L-threonine 3-dehydrogenase.